A 147-amino-acid polypeptide reads, in one-letter code: 3-dehydroquinate dehydratase (147 aa).

Catalysis depends on Tyr24, which acts as the Proton acceptor. Residues Asn73, His79, and Asp86 each coordinate substrate. His99 functions as the Proton donor in the catalytic mechanism. Residues 100–101 (LS) and Arg110 contribute to the substrate site.

Belongs to the type-II 3-dehydroquinase family. Homododecamer.

It carries out the reaction 3-dehydroquinate = 3-dehydroshikimate + H2O. Its pathway is metabolic intermediate biosynthesis; chorismate biosynthesis; chorismate from D-erythrose 4-phosphate and phosphoenolpyruvate: step 3/7. In terms of biological role, catalyzes a trans-dehydration via an enolate intermediate. The polypeptide is 3-dehydroquinate dehydratase (Hyphomonas neptunium (strain ATCC 15444)).